An 88-amino-acid polypeptide reads, in one-letter code: MANTSSAKKATRKIARRTAVNKSRRTQMRGSVRTVEEAIASGDREAALKAMANAEPALMRAAQRNIVHKNAASRKVSRLAHRIAQLGK.

Positions 1-36 (MANTSSAKKATRKIARRTAVNKSRRTQMRGSVRTVE) are disordered.

This sequence belongs to the bacterial ribosomal protein bS20 family.

Functionally, binds directly to 16S ribosomal RNA. The chain is Small ribosomal subunit protein bS20 from Rhodopseudomonas palustris (strain HaA2).